Consider the following 449-residue polypeptide: Bifunctional protein GlmU (449 aa).

The segment at 1–228 (MSTALVILAA…EAETLGINSR (228 aa)) is pyrophosphorylase. UDP-N-acetyl-alpha-D-glucosamine contacts are provided by residues 8–11 (LAAG), Lys22, Gln75, 80–81 (GT), 103–105 (YGD), Gly140, Glu154, Asn169, and Asn226. Asp105 is a binding site for Mg(2+). Residue Asn226 participates in Mg(2+) binding. The tract at residues 229–249 (ADLAAAEAVFQAHARAELLDI) is linker. Residues 250–449 (GVTLTAPETV…RAKKAAKAKG (200 aa)) form an N-acetyltransferase region. UDP-N-acetyl-alpha-D-glucosamine is bound by residues Arg315 and Lys333. His345 functions as the Proton acceptor in the catalytic mechanism. Positions 348 and 359 each coordinate UDP-N-acetyl-alpha-D-glucosamine. Residues Ala362, 368–369 (NY), Ser387, Thr405, and Arg422 contribute to the acetyl-CoA site.

This sequence in the N-terminal section; belongs to the N-acetylglucosamine-1-phosphate uridyltransferase family. It in the C-terminal section; belongs to the transferase hexapeptide repeat family. As to quaternary structure, homotrimer. The cofactor is Mg(2+).

The protein resides in the cytoplasm. The catalysed reaction is alpha-D-glucosamine 1-phosphate + acetyl-CoA = N-acetyl-alpha-D-glucosamine 1-phosphate + CoA + H(+). It catalyses the reaction N-acetyl-alpha-D-glucosamine 1-phosphate + UTP + H(+) = UDP-N-acetyl-alpha-D-glucosamine + diphosphate. It participates in nucleotide-sugar biosynthesis; UDP-N-acetyl-alpha-D-glucosamine biosynthesis; N-acetyl-alpha-D-glucosamine 1-phosphate from alpha-D-glucosamine 6-phosphate (route II): step 2/2. It functions in the pathway nucleotide-sugar biosynthesis; UDP-N-acetyl-alpha-D-glucosamine biosynthesis; UDP-N-acetyl-alpha-D-glucosamine from N-acetyl-alpha-D-glucosamine 1-phosphate: step 1/1. Its pathway is bacterial outer membrane biogenesis; LPS lipid A biosynthesis. Functionally, catalyzes the last two sequential reactions in the de novo biosynthetic pathway for UDP-N-acetylglucosamine (UDP-GlcNAc). The C-terminal domain catalyzes the transfer of acetyl group from acetyl coenzyme A to glucosamine-1-phosphate (GlcN-1-P) to produce N-acetylglucosamine-1-phosphate (GlcNAc-1-P), which is converted into UDP-GlcNAc by the transfer of uridine 5-monophosphate (from uridine 5-triphosphate), a reaction catalyzed by the N-terminal domain. The sequence is that of Bifunctional protein GlmU from Ruegeria sp. (strain TM1040) (Silicibacter sp.).